The following is a 101-amino-acid chain: Ascorbate-specific PTS system EIIB component (101 aa).

One can recognise a PTS EIIB type-2 domain in the interval 3–96 (VRILAVCGNG…KLLEVIKEHF (94 aa)). The Phosphocysteine intermediate role is filled by cysteine 9. Cysteine 9 carries the post-translational modification Phosphocysteine.

It localises to the cytoplasm. It catalyses the reaction N(pros)-phospho-L-histidyl-[protein] + L-ascorbate(out) = L-ascorbate 6-phosphate(in) + L-histidyl-[protein]. In terms of biological role, the phosphoenolpyruvate-dependent sugar phosphotransferase system (sugar PTS), a major carbohydrate active transport system, catalyzes the phosphorylation of incoming sugar substrates concomitantly with their translocation across the cell membrane. The enzyme II UlaABC PTS system is involved in ascorbate transport. The protein is Ascorbate-specific PTS system EIIB component (ulaB) of Salmonella choleraesuis (strain SC-B67).